The primary structure comprises 432 residues: Tubulin-specific chaperone cofactor E-like protein (432 aa).

LRR repeat units follow at residues 69 to 94 (ASHVSEADLGWNQISKWSDIACILKN), 95 to 117 (LPHLRVLNIGHNPLNPVIDHELP), 118 to 140 (VSTLHTIILNGTHLPFKTLQSFL), 143 to 167 (LPKVTELHMSDNQFNDDDDCDEPIS), 168 to 191 (TTVRTVHLNRCGFLKWSSVMNVVK), 193 to 217 (FPNVCSVFVCENPLKDVTHCKHFEQ), and 218 to 242 (LPFWNFLNLAKTSIDSWDSLDQLNR). The LRRCT stretch occupies residues 254–295 (IPLLDALTNEERLHLIIGRLHHLRVLNGSKISSEQREQSERF). Residues 324 to 415 (VTIDLTPKKE…GDSFLVQEKI (92 aa)) are ubiquitin-like (UBL).

It is found in the cytoplasm. The protein resides in the cytoskeleton. Its function is as follows. Acts as a regulator of tubulin stability. Involved in microtubule-dependent neuronal function. May be involved in tubulin acetylation/deacetylation pathway. In Caenorhabditis elegans, this protein is Tubulin-specific chaperone cofactor E-like protein.